The sequence spans 191 residues: FAD-linked sulfhydryl oxidase ERV1 (191 aa).

The region spanning 72–172 is the ERV/ALR sulfhydryl oxidase domain; it reads GPVTKEDLGR…FPCERVDARW (101 aa). Lys76, Arg81, Trp84, Glu121, His125, Cys148, His151, Asn152, Asn155, Lys160, and Arg171 together coordinate FAD. Cys119 and Cys122 are joined by a disulfide. Cysteines 148 and 165 form a disulfide. Cys177 and Cys182 are disulfide-bonded. The Required for dimerization and substrate specificity signature appears at 177–182; it reads CEQKSC.

Homodimer. FAD serves as cofactor. In terms of processing, contains three disulfide bonds; one catalytic disulfide (Cys-119 to Cys-122), one structural disulfide (Cys-148 to Cys-165), and one shuttle disulfide (Cys-177 to Cys-182).

Its subcellular location is the mitochondrion. It catalyses the reaction 2 R'C(R)SH + O2 = R'C(R)S-S(R)CR' + H2O2. In terms of biological role, FAD-dependent sulfhydryl oxidase that catalyzes disulfide bond formation. Oxidizes thioredoxin in vitro. Required for the import and folding of small cysteine-containing proteins in the mitochondrial intermembrane space, and can act independently of the oxidoreductase MIA40. Can oxidize the cytochrome c oxidase assembly protein COX19, a typical substrate of MIA40. The polypeptide is FAD-linked sulfhydryl oxidase ERV1 (ERV1) (Arabidopsis thaliana (Mouse-ear cress)).